A 451-amino-acid polypeptide reads, in one-letter code: Tubulin beta-1 chain (451 aa).

The MREI motif motif lies at 1–4 (MREI). 6 residues coordinate GTP: glutamine 11, glutamate 69, serine 138, glycine 142, threonine 143, and glycine 144. Position 69 (glutamate 69) interacts with Mg(2+). Serine 172 bears the Phosphoserine; by CDK1 mark. Asparagine 204 and asparagine 226 together coordinate GTP. Residues 432-451 (LEEDEEVTEEAEMEPEDKGH) form a disordered region. Over residues 433-451 (EEDEEVTEEAEMEPEDKGH) the composition is skewed to acidic residues. Glutamate 440 is subject to 5-glutamyl polyglutamate.

This sequence belongs to the tubulin family. In terms of assembly, dimer of alpha and beta chains. A typical microtubule is a hollow water-filled tube with an outer diameter of 25 nm and an inner diameter of 15 nM. Alpha-beta heterodimers associate head-to-tail to form protofilaments running lengthwise along the microtubule wall with the beta-tubulin subunit facing the microtubule plus end conferring a structural polarity. Microtubules usually have 13 protofilaments but different protofilament numbers can be found in some organisms and specialized cells. Interacts with RANBP10. Mg(2+) serves as cofactor. Some glutamate residues at the C-terminus are polyglutamylated, resulting in polyglutamate chains on the gamma-carboxyl group. Polyglutamylation plays a key role in microtubule severing by spastin (SPAST). SPAST preferentially recognizes and acts on microtubules decorated with short polyglutamate tails: severing activity by SPAST increases as the number of glutamates per tubulin rises from one to eight, but decreases beyond this glutamylation threshold. Glutamylation is also involved in cilia motility. In terms of processing, some glutamate residues at the C-terminus are monoglycylated but not polyglycylated due to the absence of functional TTLL10 in human. Monoglycylation is mainly limited to tubulin incorporated into cilia and flagella axonemes, which is required for their stability and maintenance. Flagella glycylation controls sperm motility. Both polyglutamylation and monoglycylation can coexist on the same protein on adjacent residues, and lowering glycylation levels increases polyglutamylation, and reciprocally. Post-translationally, phosphorylated on Ser-172 by CDK1 during the cell cycle, from metaphase to telophase, but not in interphase. This phosphorylation inhibits tubulin incorporation into microtubules. As to expression, hematopoietic cell-specific. Major isotype in leukocytes, where it represents 50% of all beta-tubulins.

Its subcellular location is the cytoplasm. The protein resides in the cytoskeleton. Functionally, tubulin is the major constituent of microtubules, a cylinder consisting of laterally associated linear protofilaments composed of alpha- and beta-tubulin heterodimers. Microtubules grow by the addition of GTP-tubulin dimers to the microtubule end, where a stabilizing cap forms. Below the cap, tubulin dimers are in GDP-bound state, owing to GTPase activity of alpha-tubulin. This Homo sapiens (Human) protein is Tubulin beta-1 chain (TUBB1).